Consider the following 257-residue polypeptide: Phosphomannomutase (257 aa).

Aspartate 19 (nucleophile) is an active-site residue. Mg(2+) is bound by residues aspartate 19 and aspartate 21. The active-site Proton donor/acceptor is aspartate 21. Alpha-D-mannose 1-phosphate is bound by residues arginine 28, arginine 133, arginine 144, arginine 151, serine 189, and aspartate 191. Positions 219, 231, 233, and 236 each coordinate Mg(2+).

The protein belongs to the eukaryotic PMM family. In terms of assembly, homodimer.

It localises to the cytoplasm. The enzyme catalyses alpha-D-mannose 1-phosphate = D-mannose 6-phosphate. The protein operates within nucleotide-sugar biosynthesis; GDP-alpha-D-mannose biosynthesis; alpha-D-mannose 1-phosphate from D-fructose 6-phosphate: step 2/2. In terms of biological role, involved in the synthesis of the GDP-mannose and dolichol-phosphate-mannose required for a number of critical mannosyl transfer reactions. This is Phosphomannomutase (pmm1) from Schizosaccharomyces pombe (strain 972 / ATCC 24843) (Fission yeast).